A 742-amino-acid polypeptide reads, in one-letter code: MTTIKTSNLGFPRLGRKREWKKAIESYWAKKISKEELDQTLTDLHKENLLLQKYYHLDSIPVGDFSLYDHILDTSLLFNIIPERFQGRTIDDDLLFDIARGNKDHVASALIKWFNTNYHYIVPEWDNVEPKVSRNVLLDRFKYAQSLNVNAHPVIVGPITFVKLSKGGHQTFEEKVKTLLPLYKEVFESLIDAGAEYIQVDEPILVTDDSESYENITREAYDYFEKAGVAKKLVIQTYFERAHLKFLSSLPVGGLGLDFVHDNGYNLKQIEAGDFDKSKTLYAGIIDGRNVWASDIEAKKVLIDKLLAHTNELVIQPSSSLLHVPVSLDDETLDTSVGEGLSFATEKLDELDALRRLLNQNDSVKYDKLKARYERFQNQSFKNLDYDFESVRTSRQSPFAQRIEQQQKRLNLPDLPTTTIGSFPQSREVRKYRADWKNKRITDEAYETFLKNEIARWIKIQEDIGLDVLVHGEFERNDMVEFFGEKLQGFLVTKFGWVQSYGSRAVKPPIIYGDVKWTAPLTVDETVYAQSLTDKPVKGMLTGPVTILNWSFERVDLPRKVVQDQIALAINEEVLALEAAGIKVIQVDEPALREGLPLRSEYHEQYLKDAVLSFKLATSSVRDETQIHTHMCYSQFGQIIHAIHDLDADVISIETSRSHGDLIKDFEDINYDLGIGLGVYDIHSPRIPTKEEITTAINRSLQQIDRSLFWVNPDCGLKTRKEEEVKDALTVLVNAVKAKRQE.

Residues 18–21 (REWK) and K112 each bind 5-methyltetrahydropteroyltri-L-glutamate. L-homocysteine contacts are provided by residues 420–422 (IGS) and E473. L-methionine-binding positions include 420 to 422 (IGS) and E473. W550 is a 5-methyltetrahydropteroyltri-L-glutamate binding site. D588 is an L-homocysteine binding site. D588 contributes to the L-methionine binding site. E594 is a binding site for 5-methyltetrahydropteroyltri-L-glutamate. Residues H630, C632, and E654 each coordinate Zn(2+). H683 functions as the Proton donor in the catalytic mechanism. Residue C715 participates in Zn(2+) binding.

This sequence belongs to the vitamin-B12 independent methionine synthase family. Requires Zn(2+) as cofactor.

It catalyses the reaction 5-methyltetrahydropteroyltri-L-glutamate + L-homocysteine = tetrahydropteroyltri-L-glutamate + L-methionine. The protein operates within amino-acid biosynthesis; L-methionine biosynthesis via de novo pathway; L-methionine from L-homocysteine (MetE route): step 1/1. Catalyzes the transfer of a methyl group from 5-methyltetrahydrofolate to homocysteine resulting in methionine formation. The sequence is that of 5-methyltetrahydropteroyltriglutamate--homocysteine methyltransferase from Staphylococcus aureus (strain Mu3 / ATCC 700698).